A 144-amino-acid polypeptide reads, in one-letter code: Cytochrome c3 (144 aa).

A signal peptide spans 1–24 (MRYLVISLFAVSLLMAGSALVGNA). Residues histidine 51, histidine 54, cysteine 59, cysteine 62, histidine 63, histidine 64, cysteine 76, cysteine 81, histidine 82, histidine 100, cysteine 108, cysteine 111, histidine 112, cysteine 125, cysteine 128, and histidine 129 each contribute to the heme c site.

Belongs to the cytochrome c family. In terms of assembly, homodimer. Heterotrimer of cytochrome c3 FDH2C and formate dehydrogenase FDH2 alpha and beta subunits that forms the FdhABC(3) complex. Binds 4 heme c groups per subunit.

The protein localises to the periplasm. Its function is as follows. Participates in sulfate respiration coupled with phosphorylation by transferring electrons from the enzyme dehydrogenase to ferredoxin. Gamma chain of the formate dehydrogenase (FDH) that catalyzes the reversible two-electron oxidation of formate to carbon dioxide. The gamma subunit of formate dehydrogenase forms a c-type heme. The chain is Cytochrome c3 from Nitratidesulfovibrio vulgaris (strain ATCC 29579 / DSM 644 / CCUG 34227 / NCIMB 8303 / VKM B-1760 / Hildenborough) (Desulfovibrio vulgaris).